The following is a 137-amino-acid chain: Glycine cleavage system H protein (137 aa).

Positions 36–118 (PAIIGITEYA…YGEGWLLKVE (83 aa)) constitute a Lipoyl-binding domain. K77 bears the N6-lipoyllysine mark.

This sequence belongs to the GcvH family. In terms of assembly, the glycine cleavage system is composed of four proteins: P, T, L and H. The cofactor is (R)-lipoate.

Functionally, the glycine cleavage system catalyzes the degradation of glycine. The H protein shuttles the methylamine group of glycine from the P protein to the T protein. In Bifidobacterium longum (strain NCC 2705), this protein is Glycine cleavage system H protein.